Reading from the N-terminus, the 199-residue chain is Recombination protein RecR (199 aa).

The segment at 58 to 73 adopts a C4-type zinc-finger fold; the sequence is CQTCHHLSAEPTCEIC. The region spanning 81 to 175 is the Toprim domain; the sequence is GQICVVADSR…RVSRIAYGLP (95 aa).

Belongs to the RecR family.

May play a role in DNA repair. It seems to be involved in an RecBC-independent recombinational process of DNA repair. It may act with RecF and RecO. The protein is Recombination protein RecR of Synechococcus sp. (strain WH7803).